A 335-amino-acid polypeptide reads, in one-letter code: MIRDKISVSIQTLRWKCIESRAYSKRLHYGRFALSPLRKGRADTIGIAMRRALLGEVEGTCITRVKLENIKHEYSAIIGIEESVHDILMNLKEIVLRSDSYGIREASIYIVGPRNVTAQDIILPPSVKIIDTTQHIARLTKSITSDIRLQIEKNRGYIIHSSNNYQDGIFPIDAVFMPVRDANYSIHSYGSGNEIQEVLFLEIWTNGGLTPREALYEASRNLIDLFIPFLHGEEQNIDGMNNKKGSNMLPFPLSHVLTDTGETKEKIAFKHIFIDQLELPPKTYNSLRRANIHTLLDLLNYSREDLMKIEHLEKESVEQVLEVLRKRFAIDPPRN.

An alpha N-terminal domain (alpha-NTD) region spans residues 1–233 (MIRDKISVSI…DLFIPFLHGE (233 aa)). The alpha C-terminal domain (alpha-CTD) stretch occupies residues 264–335 (KEKIAFKHIF…KRFAIDPPRN (72 aa)).

Belongs to the RNA polymerase alpha chain family. In plastids the minimal PEP RNA polymerase catalytic core is composed of four subunits: alpha, beta, beta', and beta''. When a (nuclear-encoded) sigma factor is associated with the core the holoenzyme is formed, which can initiate transcription.

The protein localises to the plastid. It localises to the chloroplast. The enzyme catalyses RNA(n) + a ribonucleoside 5'-triphosphate = RNA(n+1) + diphosphate. Its function is as follows. DNA-dependent RNA polymerase catalyzes the transcription of DNA into RNA using the four ribonucleoside triphosphates as substrates. This Pinus koraiensis (Korean pine) protein is DNA-directed RNA polymerase subunit alpha.